Consider the following 2201-residue polypeptide: Voltage-dependent T-type calcium channel subunit alpha-1I (2201 aa).

Residues 1 to 45 (MADSNLPPSSAAAPAPEPGITEQPGPRSPPPSPPGLEEPLEGTNP) are disordered. Topologically, residues 1-76 (MADSNLPPSS…RNWCIKMVCN (76 aa)) are cytoplasmic. Residues 26-36 (PRSPPPSPPGL) show a composition bias toward pro residues. An I repeat occupies 64–399 (TSPRNWCIKM…LCLVVIATQF (336 aa)). Residues 77–97 (PWFECVSMLVILLNCVTLGMY) form a helical membrane-spanning segment. Over 98–115 (QPCDDMECLSDRCKILQV) the chain is Extracellular. The helical transmembrane segment at 116-137 (FDDFIFIFFAMEMVLKMVALGI) threads the bilayer. Residues 138–146 (FGKKCYLGD) lie on the Cytoplasmic side of the membrane. A helical membrane pass occupies residues 147-166 (TWNRLDFFIVMAGMVEYSLD). Over 167–171 (LQNIN) the chain is Extracellular. N-linked (GlcNAc...) asparagine glycosylation occurs at asparagine 171. The chain crosses the membrane as a helical span at residues 172 to 189 (LSAIRTVRVLRPLKAINR). Residues 190 to 209 (VPSMRILVNLLLDTLPMLGN) are Cytoplasmic-facing. A helical membrane pass occupies residues 210–230 (VLLLCFFVFFIFGIIGVQLWA). Topologically, residues 231–371 (GLLRNRCFLE…YYVMDAHSFY (141 aa)) are extracellular. Residues asparagine 242 and asparagine 309 are each glycosylated (N-linked (GlcNAc...) asparagine). The chain crosses the membrane as a helical span at residues 372–396 (NFIYFILLIIVGSFFMINLCLVVIA). Residues 397–598 (TQFSETKQRE…EKLRGIVDSK (202 aa)) lie on the Cytoplasmic side of the membrane. Disordered stretches follow at residues 463–500 (QAMG…TPHT) and 513–579 (PSSC…AARL). Residues 545–554 (SAEAEANGDG) are compositionally biased toward low complexity. The stretch at 584 to 823 (WRETREKLRG…LLVAILVEGF (240 aa)) is one II repeat. The chain crosses the membrane as a helical span at residues 599 to 619 (YFNRGIMMAILVNTVSMGIEH). The Extracellular portion of the chain corresponds to 620–632 (HEQPEELTNILEI). A helical membrane pass occupies residues 633 to 654 (CNVVFTSMFALEMILKLAAFGL). Residues 655–660 (FDYLRN) are Cytoplasmic-facing. The helical transmembrane segment at 661–679 (PYNIFDSIIVIISIWEIVG) threads the bilayer. Residues 680-687 (QADGGLSV) lie on the Extracellular side of the membrane. Residues 688 to 711 (LRTFRLLRVLKLVRFMPALRRQLV) traverse the membrane as a helical segment. At 712–722 (VLMKTMDNVAT) the chain is on the cytoplasmic side. Residues 723–743 (FCMLLMLFIFIFSILGMHIFG) form a helical membrane-spanning segment. Residues 744-795 (CKFSLRTDTGDTVPDRKNFDSLLWAIVTVFQILTQEDWNVVLYNGMASTTPW) lie on the Extracellular side of the membrane. The chain crosses the membrane as a helical span at residues 796-820 (ASLYFVALMTFGNYVLFNLLVAILV). Topologically, residues 821–1125 (EGFQAEGDAN…NKFRILCQTI (305 aa)) are cytoplasmic. The interval 936 to 969 (WGRSGTWASRRSSWNSLKHKPPSAEHESLLSGEG) is disordered. Over residues 941 to 951 (TWASRRSSWNS) the composition is skewed to polar residues. Serine 1017 carries the post-translational modification Phosphoserine. An III repeat occupies 1116–1393 (NKFRILCQTI…MFVGVVVENF (278 aa)). Residues 1126-1148 (IAHKLFDYVVLAFIFLNCITIAL) traverse the membrane as a helical segment. Over 1149 to 1166 (ERPQIEAGSTERIFLTVS) the chain is Extracellular. A helical membrane pass occupies residues 1167-1187 (NYIFTAIFVGEMTLKVVSLGL). The Cytoplasmic segment spans residues 1188–1197 (YFGEQAYLRS). A helical membrane pass occupies residues 1198–1217 (SWNVLDGFLVFVSIIDIVVS). At 1218-1231 (VASAGGAKILGVLR) the chain is on the extracellular side. Residues 1232–1253 (VLRLLRTLRPLRVISRAPGLKL) traverse the membrane as a helical segment. The Cytoplasmic segment spans residues 1254–1263 (VVETLISSLK). The chain crosses the membrane as a helical span at residues 1264–1287 (PIGNIVLICCAFFIIFGILGVQLF). The Extracellular portion of the chain corresponds to 1288 to 1364 (KGKFYHCLGV…DQQPVTNHNP (77 aa)). Asparagine 1301 and asparagine 1304 each carry an N-linked (GlcNAc...) asparagine glycan. Residues 1365–1390 (WMLLYFISFLLIVSFFVLNMFVGVVV) traverse the membrane as a helical segment. Residues 1391 to 1445 (ENFHKCRQHQEAEEARRREEKRLRRLEKKRRKAQRLPYYATYCPTRLLIHSMCTS) are Cytoplasmic-facing. The stretch at 1431–1692 (TYCPTRLLIH…VVVAVLMKHL (262 aa)) is one IV repeat. Residues 1446–1466 (HYLDIFITFIICLNVVTMSLE) form a helical membrane-spanning segment. At 1467-1480 (HYNQPTSLETALKY) the chain is on the extracellular side. The chain crosses the membrane as a helical span at residues 1481–1502 (CNYMFTTVFVLEAVLKLVAFGL). At 1503 to 1509 (RRFFKDR) the chain is on the cytoplasmic side. Residues 1510–1528 (WNQLDLAIVLLSVMGITLE) traverse the membrane as a helical segment. Residues 1529–1542 (EIEINAALPINPTI) lie on the Extracellular side of the membrane. A helical membrane pass occupies residues 1543–1566 (IRIMRVLRIARVLKLLKMATGMRA). Topologically, residues 1567–1580 (LLDTVVQALPQVGN) are cytoplasmic. The chain crosses the membrane as a helical span at residues 1581–1601 (LGLLFMLLFFIYAALGVELFG). Residues 1602–1664 (KLVCNDENPC…RSCLSSLQFV (63 aa)) lie on the Extracellular side of the membrane. Residues 1665-1692 (SPLYFVSFVLTAQFVLINVVVAVLMKHL) form a helical membrane-spanning segment. Residues 1693–1835 (DDSNKEAQED…EVQLAETEAF (143 aa)) lie on the Cytoplasmic side of the membrane. 5 disordered regions span residues 1846–1876 (LLGD…PEPM), 1916–1938 (LKHD…PLLQ), 1992–2045 (SDTS…TRRR), 2057–2105 (RGLR…HSET), and 2126–2201 (LTPA…KRKR). Low complexity predominate over residues 1992 to 2007 (SDTSLDASPSSSAGSL). Polar residues-rich tracts occupy residues 2008-2019 (QTTLEDSLTLSD) and 2066-2075 (HSSGGSTSPG). Over residues 2077 to 2090 (THHDSMDPSDEEGR) the composition is skewed to basic and acidic residues.

It belongs to the calcium channel alpha-1 subunit (TC 1.A.1.11) family. CACNA1I subfamily. Interacts with CATSPER1 and CATSPER2, leading to suppress T-type calcium channel activity. Post-translationally, in response to raising of intracellular calcium, the T-type channels are activated by CaM-kinase II. In terms of tissue distribution, brain.

It localises to the membrane. The catalysed reaction is Ca(2+)(in) = Ca(2+)(out). Voltage-sensitive calcium channels (VSCC) mediate the entry of calcium ions into excitable cells and are also involved in a variety of calcium-dependent processes, including muscle contraction, hormone or neurotransmitter release, gene expression, cell motility, cell division and cell death. This channel gives rise to T-type calcium currents. T-type calcium channels belong to the 'low-voltage activated (LVA)' group and are strongly blocked by nickel and mibefradil. A particularity of this type of channels is an opening at quite negative potentials, and a voltage-dependent inactivation. T-type channels serve pacemaking functions in both central neurons and cardiac nodal cells and support calcium signaling in secretory cells and vascular smooth muscle. They may also be involved in the modulation of firing patterns of neurons which is important for information processing as well as in cell growth processes. Gates in voltage ranges similar to, but higher than alpha 1G or alpha 1H. In terms of biological role, voltage-sensitive calcium channels (VSCC) mediate the entry of calcium ions into excitable cells and are also involved in a variety of calcium-dependent processes, including muscle contraction, hormone or neurotransmitter release, gene expression, cell motility, cell division and cell death. This channel gives rise to T-type calcium currents. The sequence is that of Voltage-dependent T-type calcium channel subunit alpha-1I (Cacna1i) from Rattus norvegicus (Rat).